The chain runs to 233 residues: Probable dihydroorotate dehydrogenase B (NAD(+)), electron transfer subunit (233 aa).

Positions 1–87 (MYRVVTIEEV…RGPYGHGFIK (87 aa)) constitute an FAD-binding FR-type domain. C202, C207, C210, and C218 together coordinate [2Fe-2S] cluster.

It belongs to the PyrK family. In terms of assembly, heterotetramer of 2 PyrK and 2 PyrD type B subunits. [2Fe-2S] cluster is required as a cofactor. Requires FAD as cofactor.

Its pathway is pyrimidine metabolism; UMP biosynthesis via de novo pathway; orotate from (S)-dihydroorotate (NAD(+) route): step 1/1. In terms of biological role, responsible for channeling the electrons from the oxidation of dihydroorotate from the FMN redox center in the PyrD type B subunit to the ultimate electron acceptor NAD(+). This is Probable dihydroorotate dehydrogenase B (NAD(+)), electron transfer subunit from Thermococcus kodakarensis (strain ATCC BAA-918 / JCM 12380 / KOD1) (Pyrococcus kodakaraensis (strain KOD1)).